The following is a 346-amino-acid chain: Sensor protein kinase GraS (346 aa).

Transmembrane regions (helical) follow at residues 15-35 (MNWIFWILFLNLLMLGISLID) and 43-63 (LFYIVSLNLSLTMIFLILTYF). Residues 126 to 332 (EFVHDIKTPV…TVRLIFPLQN (207 aa)) enclose the Histidine kinase domain.

In terms of assembly, interacts with GraX.

Its subcellular location is the cell membrane. It carries out the reaction ATP + protein L-histidine = ADP + protein N-phospho-L-histidine.. In terms of biological role, member of the two-component regulatory system GraR/GraS involved in resistance against cationic antimicrobial peptides (CAMPs). Functions as a sensor protein kinase which phosphorylates GraR through the auxiliary protein GraX. In turn, GraR up-regulates many genes such as adhesins, exoproteins, transporters, toxins, and proteins involved in cell wall synthesis. Down-regulates the expression of many genes involved in RNA and amino acid synthesis or glycolysis. The chain is Sensor protein kinase GraS (graS) from Staphylococcus aureus (strain bovine RF122 / ET3-1).